The chain runs to 290 residues: Tubulin beta-4B chain (290 aa).

The MREI motif motif lies at 1–4 (MREI). Residue Gln-11 coordinates GTP. A Phosphothreonine modification is found at Thr-55. At Lys-58 the chain carries N6-acetyllysine. 6 residues coordinate GTP: Glu-69, Ser-138, Gly-142, Thr-143, Gly-144, and Asn-172. Glu-69 serves as a coordination point for Mg(2+).

Belongs to the tubulin family. In terms of assembly, dimer of alpha and beta chains. A typical microtubule is a hollow water-filled tube with an outer diameter of 25 nm and an inner diameter of 15 nM. Alpha-beta heterodimers associate head-to-tail to form protofilaments running lengthwise along the microtubule wall with the beta-tubulin subunit facing the microtubule plus end conferring a structural polarity. Microtubules usually have 13 protofilaments but different protofilament numbers can be found in some organisms and specialized cells. Component of sperm flagellar doublet microtubules. Mg(2+) is required as a cofactor. Some glutamate residues at the C-terminus are polyglycylated, resulting in polyglycine chains on the gamma-carboxyl group. Glycylation is mainly limited to tubulin incorporated into axonemes (cilia and flagella) whereas glutamylation is prevalent in neuronal cells, centrioles, axonemes, and the mitotic spindle. Both modifications can coexist on the same protein on adjacent residues, and lowering polyglycylation levels increases polyglutamylation, and reciprocally. Cilia and flagella glycylation is required for their stability and maintenance. Flagella glycylation controls sperm motility. Post-translationally, some glutamate residues at the C-terminus are polyglutamylated, resulting in polyglutamate chains on the gamma-carboxyl group. Polyglutamylation plays a key role in microtubule severing by spastin (SPAST). SPAST preferentially recognizes and acts on microtubules decorated with short polyglutamate tails: severing activity by SPAST increases as the number of glutamates per tubulin rises from one to eight, but decreases beyond this glutamylation threshold. Glutamylation is also involved in cilia motility.

Its subcellular location is the cytoplasm. It localises to the cytoskeleton. The protein resides in the flagellum axoneme. Functionally, tubulin is the major constituent of microtubules, a cylinder consisting of laterally associated linear protofilaments composed of alpha- and beta-tubulin heterodimers. Microtubules grow by the addition of GTP-tubulin dimers to the microtubule end, where a stabilizing cap forms. Below the cap, tubulin dimers are in GDP-bound state, owing to GTPase activity of alpha-tubulin. In Mesocricetus auratus (Golden hamster), this protein is Tubulin beta-4B chain (TUBB4B).